A 270-amino-acid chain; its full sequence is Elongation factor Ts (270 aa).

The interval 76–79 (TDFV) is involved in Mg(2+) ion dislocation from EF-Tu.

Belongs to the EF-Ts family.

The protein localises to the cytoplasm. Functionally, associates with the EF-Tu.GDP complex and induces the exchange of GDP to GTP. It remains bound to the aminoacyl-tRNA.EF-Tu.GTP complex up to the GTP hydrolysis stage on the ribosome. In Corynebacterium aurimucosum (strain ATCC 700975 / DSM 44827 / CIP 107346 / CN-1) (Corynebacterium nigricans), this protein is Elongation factor Ts.